The sequence spans 522 residues: 2-isopropylmalate synthase (522 aa).

Positions 5 to 267 (VIIFDTTLRD…ETGINAKEIH (263 aa)) constitute a Pyruvate carboxyltransferase domain. Mn(2+) contacts are provided by aspartate 14, histidine 202, histidine 204, and asparagine 238. Positions 392–522 (QLQQLVVQSD…MHKNRELGGV (131 aa)) are regulatory domain.

Belongs to the alpha-IPM synthase/homocitrate synthase family. LeuA type 1 subfamily. Homodimer. Mn(2+) is required as a cofactor.

It is found in the cytoplasm. The catalysed reaction is 3-methyl-2-oxobutanoate + acetyl-CoA + H2O = (2S)-2-isopropylmalate + CoA + H(+). It participates in amino-acid biosynthesis; L-leucine biosynthesis; L-leucine from 3-methyl-2-oxobutanoate: step 1/4. Its function is as follows. Catalyzes the condensation of the acetyl group of acetyl-CoA with 3-methyl-2-oxobutanoate (2-ketoisovalerate) to form 3-carboxy-3-hydroxy-4-methylpentanoate (2-isopropylmalate). The sequence is that of 2-isopropylmalate synthase from Shewanella sp. (strain MR-4).